The sequence spans 445 residues: NAD(P)H coenzyme A polysulfide/persulfide reductase (445 aa).

16 to 17 (AA) lines the FAD pocket. R27 contacts CoA. Residues 38–39 (EA) and 45–47 (HAP) each bind FAD. Residues 44–48 (SHAPC), 65–66 (YY), and R75 contribute to the CoA site. The active-site Redox-active is C48. Residues V85, D283, and A301 each coordinate FAD. 2 residues coordinate CoA: N305 and K361. Y425 serves as a coordination point for FAD. CoA-binding residues include W433 and R441.

Belongs to the class-III pyridine nucleotide-disulfide oxidoreductase family. As to quaternary structure, homodimer. Homotetramer. FAD serves as cofactor.

It carries out the reaction NADP(+) + 2 CoA = CoA-disulfide + NADPH + H(+). The enzyme catalyses NAD(+) + 2 CoA = CoA-disulfide + NADH + H(+). Catalyzes the NAD(P)H-dependent reduction of polysulfide, CoA-polysulfides, and CoA persulfide, as well as the reduction of a range of other small persulfides, including TNB and glutathione persulfides. The likely in vivo substrates are di-, poly-, and persulfide derivatives of coenzyme A, although polysulfide itself is also efficiently reduced. Shows coenzyme A disulfide reductase (CoADR) activity with both NADH and NADPH, with a preference for NADPH. May also play a role in the reduction of elemental sulfur. The polypeptide is NAD(P)H coenzyme A polysulfide/persulfide reductase (Pyrococcus horikoshii (strain ATCC 700860 / DSM 12428 / JCM 9974 / NBRC 100139 / OT-3)).